Consider the following 191-residue polypeptide: Calcium-activated potassium channel subunit beta-1 (191 aa).

At 1–18 the chain is on the cytoplasmic side; that stretch reads MVKKLVMAQKRGETRALC. The helical transmembrane segment at 19 to 39 threads the bilayer; it reads LGVTMVVCAVITYYILVTTVL. Topologically, residues 40–157 are extracellular; sequence PLYQKSVWTQ…FQRLYGPQAL (118 aa). N-linked (GlcNAc...) asparagine glycans are attached at residues N80 and N142. A helical transmembrane segment spans residues 158-178; the sequence is LFSLFWPTFLLTGGLLIIAMV. Over 179-191 the chain is Cytoplasmic; the sequence is KSNQYLSILAAQK.

It belongs to the KCNMB (TC 8.A.14.1) family. KCNMB1 subfamily. As to quaternary structure, interacts with KCNMA1 tetramer. There are probably 4 molecules of KCMNB1 per KCNMA1 tetramer. Post-translationally, N-glycosylated. As to expression, abundantly expressed in smooth muscle. Low levels of expression in most other tissues. Within the brain, relatively high levels found in hippocampus and corpus callosum.

It localises to the membrane. Its function is as follows. Regulatory subunit of the calcium activated potassium KCNMA1 (maxiK) channel. Modulates the calcium sensitivity and gating kinetics of KCNMA1, thereby contributing to KCNMA1 channel diversity. Increases the apparent Ca(2+)/voltage sensitivity of the KCNMA1 channel. It also modifies KCNMA1 channel kinetics and alters its pharmacological properties. It slows down the activation and the deactivation kinetics of the channel. Acts as a negative regulator of smooth muscle contraction by enhancing the calcium sensitivity to KCNMA1. Its presence is also a requirement for internal binding of the KCNMA1 channel opener dehydrosoyasaponin I (DHS-1) triterpene glycoside and for external binding of the agonist hormone 17-beta-estradiol (E2). Increases the binding activity of charybdotoxin (CTX) toxin to KCNMA1 peptide blocker by increasing the CTX association rate and decreasing the dissociation rate. This chain is Calcium-activated potassium channel subunit beta-1 (KCNMB1), found in Homo sapiens (Human).